A 276-amino-acid chain; its full sequence is Light-independent protochlorophyllide reductase iron-sulfur ATP-binding protein (276 aa).

ATP is bound by residues 12–17 and Lys-41; that span reads GIGKST. Residue Ser-16 participates in Mg(2+) binding. Positions 97 and 131 each coordinate [4Fe-4S] cluster. 182–183 lines the ATP pocket; it reads NR.

The protein belongs to the NifH/BchL/ChlL family. As to quaternary structure, homodimer. Protochlorophyllide reductase is composed of three subunits; BchL, BchN and BchB. [4Fe-4S] cluster is required as a cofactor.

The catalysed reaction is chlorophyllide a + oxidized 2[4Fe-4S]-[ferredoxin] + 2 ADP + 2 phosphate = protochlorophyllide a + reduced 2[4Fe-4S]-[ferredoxin] + 2 ATP + 2 H2O. It participates in porphyrin-containing compound metabolism; bacteriochlorophyll biosynthesis (light-independent). Functionally, component of the dark-operative protochlorophyllide reductase (DPOR) that uses Mg-ATP and reduced ferredoxin to reduce ring D of protochlorophyllide (Pchlide) to form chlorophyllide a (Chlide). This reaction is light-independent. The L component serves as a unique electron donor to the NB-component of the complex, and binds Mg-ATP. In Chlorobium luteolum (strain DSM 273 / BCRC 81028 / 2530) (Pelodictyon luteolum), this protein is Light-independent protochlorophyllide reductase iron-sulfur ATP-binding protein.